Here is a 306-residue protein sequence, read N- to C-terminus: Oxygen-dependent coproporphyrinogen-III oxidase (306 aa).

Ser99 lines the substrate pocket. The a divalent metal cation site is built by His103 and His113. The Proton donor role is filled by His113. Position 115–117 (115–117 (NVR)) interacts with substrate. A divalent metal cation-binding residues include His152 and His182. An important for dimerization region spans residues 247-282 (YVEFNLVFDRGTLFGLQSGGRTESILMSMPPVANWR). A substrate-binding site is contributed by 265–267 (GGR).

The protein belongs to the aerobic coproporphyrinogen-III oxidase family. In terms of assembly, homodimer. It depends on a divalent metal cation as a cofactor.

Its subcellular location is the cytoplasm. The catalysed reaction is coproporphyrinogen III + O2 + 2 H(+) = protoporphyrinogen IX + 2 CO2 + 2 H2O. It functions in the pathway porphyrin-containing compound metabolism; protoporphyrin-IX biosynthesis; protoporphyrinogen-IX from coproporphyrinogen-III (O2 route): step 1/1. Functionally, involved in the heme biosynthesis. Catalyzes the aerobic oxidative decarboxylation of propionate groups of rings A and B of coproporphyrinogen-III to yield the vinyl groups in protoporphyrinogen-IX. In Burkholderia ambifaria (strain MC40-6), this protein is Oxygen-dependent coproporphyrinogen-III oxidase.